Reading from the N-terminus, the 414-residue chain is Enterobactin exporter EntS (414 aa).

Topologically, residues 1–21 (MNRQSWLLNLSLLKTHPAFRA) are cytoplasmic. A helical membrane pass occupies residues 22–42 (VFLARFISIVSLGLLGVAVPV). Over 43–55 (QIQMMTHSTWQVG) the chain is Periplasmic. A helical membrane pass occupies residues 56-76 (LSVTLTGGAMFIGLMVGGVLA). Over 77 to 83 (DRYERKK) the chain is Cytoplasmic. Residues 84 to 104 (VILLARGTCGIGFIGLCVNSL) traverse the membrane as a helical segment. Residues 105–109 (LPEPS) lie on the Periplasmic side of the membrane. The helical transmembrane segment at 110–130 (LLAIYLLGLWDGFFASLGVTA) threads the bilayer. Residues 131-156 (LLAATPALVGRENLMQAGAITMLTVR) lie on the Cytoplasmic side of the membrane. The helical transmembrane segment at 157-177 (LGSVISPMLGGILLASGGVAW) threads the bilayer. A topological domain (periplasmic) is located at residue Asn178. Residues 179-199 (YGLAAAGTFITLLPLLTLPRL) form a helical membrane-spanning segment. Over 200–218 (PVPPQPRENPFIALLAAFR) the chain is Cytoplasmic. Residues 219–239 (FLLASPLIGGIALLGGLVTMA) traverse the membrane as a helical segment. The Periplasmic segment spans residues 240–256 (SAVRVLYPALAMSWQMS). A helical membrane pass occupies residues 257–277 (AAQIGLLYAAIPLGAAIGALT). Over 278 to 287 (SGQLAHSVRP) the chain is Cytoplasmic. The chain crosses the membrane as a helical span at residues 288 to 307 (GLIMLVSTVGSFLAVGLFAI). Topologically, residues 308 to 313 (MPVWTA) are periplasmic. The chain crosses the membrane as a helical span at residues 314–336 (GVICLALFGWLSAISSLLQYTLL). Topologically, residues 337–356 (QTQTPENMLGRMNGLWTAQN) are cytoplasmic. The chain crosses the membrane as a helical span at residues 357–377 (VTGDAIGAALLGGLGAMMTPV). Position 378 (Ala378) is a topological domain, periplasmic. A helical membrane pass occupies residues 379-399 (SASVSGFGLVIIGLLLLLVLG). The Cytoplasmic portion of the chain corresponds to 400-414 (ELRRFRQTPPVSDAG).

This sequence belongs to the major facilitator superfamily. EntS (TC 2.A.1.38) family.

The protein resides in the cell inner membrane. In terms of biological role, component of an export pathway for enterobactin. In Salmonella choleraesuis (strain SC-B67), this protein is Enterobactin exporter EntS.